A 530-amino-acid chain; its full sequence is Glucose-6-phosphate isomerase (530 aa).

Catalysis depends on E322, which acts as the Proton donor. Active-site residues include H351 and K455.

Belongs to the GPI family.

The protein resides in the cytoplasm. The enzyme catalyses alpha-D-glucose 6-phosphate = beta-D-fructose 6-phosphate. The protein operates within carbohydrate biosynthesis; gluconeogenesis. Its pathway is carbohydrate degradation; glycolysis; D-glyceraldehyde 3-phosphate and glycerone phosphate from D-glucose: step 2/4. Its function is as follows. Catalyzes the reversible isomerization of glucose-6-phosphate to fructose-6-phosphate. The polypeptide is Glucose-6-phosphate isomerase (Citrifermentans bemidjiense (strain ATCC BAA-1014 / DSM 16622 / JCM 12645 / Bem) (Geobacter bemidjiensis)).